The sequence spans 370 residues: ECF RNA polymerase sigma factor SigG (370 aa).

Residues 63–129 are sigma-70 factor domain-2; the sequence is EPYRRELLAH…LTALEGRRRR (67 aa). The Polymerase core binding signature appears at 85 to 88; the sequence is DLVQ. The tract at residues 180–232 is sigma-70 factor domain-4; that stretch reads LAFVAALQHLSPRQRAVLLLRDVLQWKSAEVADAIGTSTVAVNSLLQRARSQL. Residues 207–226 constitute a DNA-binding region (H-T-H motif); that stretch reads SAEVADAIGTSTVAVNSLLQ.

This sequence belongs to the sigma-70 factor family. ECF subfamily. In terms of assembly, interacts transiently with the RNA polymerase catalytic core formed by RpoA, RpoB, RpoC and RpoZ (2 alpha, 1 beta, 1 beta' and 1 omega subunit) to form the RNA polymerase holoenzyme that can initiate transcription.

Functionally, sigma factors are initiation factors that promote the attachment of RNA polymerase to specific initiation sites and are then released. Extracytoplasmic function (ECF) sigma factors are held in an inactive form by a cognate anti-sigma factor until released, although no anti-sigma factor is known for this protein. May be involved in host intracellular survival after infection (strains H37Rv and CDC 1551). A role in the SOS response is controversial; it has been seen in strain CDC 1551 but not in H37Rv. The sequence is that of ECF RNA polymerase sigma factor SigG (sigG) from Mycobacterium tuberculosis (strain CDC 1551 / Oshkosh).